The chain runs to 184 residues: Photosystem I assembly protein Ycf4 (184 aa).

The next 2 helical transmembrane spans lie at 22-42 (FCWA…GTSS) and 57-77 (ILFF…LFIS).

The protein belongs to the Ycf4 family.

The protein resides in the plastid. It localises to the chloroplast thylakoid membrane. Functionally, seems to be required for the assembly of the photosystem I complex. This chain is Photosystem I assembly protein Ycf4, found in Liriodendron tulipifera (Tuliptree).